The chain runs to 152 residues: Erythema protein SVEP (152 aa).

Residues Met1 to Ala18 form the signal peptide.

Salivary gland (at protein level).

Its subcellular location is the secreted. Functionally, salivary vasoactive peptide; induces vasodilatation in bioassay with rabbit aortic rings. This chain is Erythema protein SVEP, found in Simulium vittatum (Striped black fly).